We begin with the raw amino-acid sequence, 94 residues long: MNVYSVIKKPHVTEKASLGSDATNTVTIVVDRDANKIEIKQAVETLFKVKVDSVRTVNVAGKVKRFGRNFGKHSNWKKAFVTLSEGQSLDFFEV.

The protein belongs to the universal ribosomal protein uL23 family. Part of the 50S ribosomal subunit. Contacts protein L29, and trigger factor when it is bound to the ribosome.

Functionally, one of the early assembly proteins it binds 23S rRNA. One of the proteins that surrounds the polypeptide exit tunnel on the outside of the ribosome. Forms the main docking site for trigger factor binding to the ribosome. This is Large ribosomal subunit protein uL23 from Pelobacter propionicus (strain DSM 2379 / NBRC 103807 / OttBd1).